The chain runs to 364 residues: Histidinol-phosphate aminotransferase (364 aa).

An N6-(pyridoxal phosphate)lysine modification is found at lysine 224.

It belongs to the class-II pyridoxal-phosphate-dependent aminotransferase family. Histidinol-phosphate aminotransferase subfamily. Homodimer. It depends on pyridoxal 5'-phosphate as a cofactor.

It carries out the reaction L-histidinol phosphate + 2-oxoglutarate = 3-(imidazol-4-yl)-2-oxopropyl phosphate + L-glutamate. It functions in the pathway amino-acid biosynthesis; L-histidine biosynthesis; L-histidine from 5-phospho-alpha-D-ribose 1-diphosphate: step 7/9. This is Histidinol-phosphate aminotransferase from Anaeromyxobacter sp. (strain Fw109-5).